We begin with the raw amino-acid sequence, 136 residues long: Large ribosomal subunit protein uL16 (136 aa).

Belongs to the universal ribosomal protein uL16 family. As to quaternary structure, part of the 50S ribosomal subunit.

Binds 23S rRNA and is also seen to make contacts with the A and possibly P site tRNAs. This chain is Large ribosomal subunit protein uL16, found in Buchnera aphidicola subsp. Cinara cedri (strain Cc).